The chain runs to 313 residues: MSQDFAHLSVLLAETVDGLNIRADGIYIDGTFGRGGHSREVLSRLGVDGRLIAIDRDPQAIKAAEQFANDSRFQIVHGGFGQLANYVEELGLVGKIDGVLLDLGVSSPQLDDAERGFSFLRDGPLDMRMDNSQGETAAQWLARAEIEDMAWVFKTYGEERNARHIARCIAADREKTPFTRTKQLADLIARVAKSKERNKHPATRVFQAIRIYINSELEQIDQALEGALKVLAPHGRLSIISFHSLEDRIVKRFIRRHSQGEELPHGLPVTEAQLNKSRTLMPVGKAMKPSDVEIEQNARARSSVLRVAERLPF.

S-adenosyl-L-methionine contacts are provided by residues 35–37 (GGH), Asp-55, Phe-80, Asp-102, and Gln-109.

It belongs to the methyltransferase superfamily. RsmH family.

It localises to the cytoplasm. It catalyses the reaction cytidine(1402) in 16S rRNA + S-adenosyl-L-methionine = N(4)-methylcytidine(1402) in 16S rRNA + S-adenosyl-L-homocysteine + H(+). Functionally, specifically methylates the N4 position of cytidine in position 1402 (C1402) of 16S rRNA. The sequence is that of Ribosomal RNA small subunit methyltransferase H from Shewanella amazonensis (strain ATCC BAA-1098 / SB2B).